The sequence spans 257 residues: Putative transcription factor R430 (257 aa).

Disordered regions lie at residues 1–35 (MEKF…DNNS) and 58–77 (SLKS…PNKS). Over residues 7–25 (TDNTTDNTTDNTTDNTTDN) the composition is skewed to low complexity. Positions 26-35 (TTDKLTDNNS) are enriched in basic and acidic residues.

The protein belongs to the nucleo-cytoplasmic large DNA viruses (NCLDVs) VLTF-3 family.

In terms of biological role, putative transcription factor. This chain is Putative transcription factor R430, found in Acanthamoeba polyphaga (Amoeba).